The chain runs to 161 residues: ATP synthase subunit b 1 (161 aa).

The helical transmembrane segment at 1 to 21 (MFATAEFWILACLVAFFAILG) threads the bilayer.

The protein belongs to the ATPase B chain family. F-type ATPases have 2 components, F(1) - the catalytic core - and F(0) - the membrane proton channel. F(1) has five subunits: alpha(3), beta(3), gamma(1), delta(1), epsilon(1). F(0) has three main subunits: a(1), b(2) and c(10-14). The alpha and beta chains form an alternating ring which encloses part of the gamma chain. F(1) is attached to F(0) by a central stalk formed by the gamma and epsilon chains, while a peripheral stalk is formed by the delta and b chains.

The protein localises to the cell inner membrane. F(1)F(0) ATP synthase produces ATP from ADP in the presence of a proton or sodium gradient. F-type ATPases consist of two structural domains, F(1) containing the extramembraneous catalytic core and F(0) containing the membrane proton channel, linked together by a central stalk and a peripheral stalk. During catalysis, ATP synthesis in the catalytic domain of F(1) is coupled via a rotary mechanism of the central stalk subunits to proton translocation. In terms of biological role, component of the F(0) channel, it forms part of the peripheral stalk, linking F(1) to F(0). In Parvibaculum lavamentivorans (strain DS-1 / DSM 13023 / NCIMB 13966), this protein is ATP synthase subunit b 1.